Here is a 449-residue protein sequence, read N- to C-terminus: UDP-N-acetylmuramoylalanine--D-glutamate ligase (449 aa).

An ATP-binding site is contributed by 118-124; sequence GTNGKTT.

It belongs to the MurCDEF family.

Its subcellular location is the cytoplasm. It catalyses the reaction UDP-N-acetyl-alpha-D-muramoyl-L-alanine + D-glutamate + ATP = UDP-N-acetyl-alpha-D-muramoyl-L-alanyl-D-glutamate + ADP + phosphate + H(+). It participates in cell wall biogenesis; peptidoglycan biosynthesis. In terms of biological role, cell wall formation. Catalyzes the addition of glutamate to the nucleotide precursor UDP-N-acetylmuramoyl-L-alanine (UMA). The protein is UDP-N-acetylmuramoylalanine--D-glutamate ligase of Staphylococcus haemolyticus (strain JCSC1435).